Consider the following 142-residue polypeptide: Midkine (142 aa).

The first 21 residues, methionine 1–alanine 21, serve as a signal peptide directing secretion. 5 disulfide bridges follow: cysteine 36–cysteine 60, cysteine 44–cysteine 69, cysteine 51–cysteine 73, cysteine 83–cysteine 115, and cysteine 93–cysteine 125.

It belongs to the pleiotrophin family.

The protein resides in the secreted. Secreted protein that functions as a cytokine and growth factor and mediates its signal through cell-surface proteoglycan and non-proteoglycan receptors. Binds cell-surface proteoglycan receptors via their chondroitin sulfate (CS) groups. Thereby regulates many processes like inflammatory response, cell proliferation, cell adhesion, cell growth, cell survival, tissue regeneration, cell differentiation and cell migration. Inhibits mesoderm formation and promotes neural formation during development. Plays a role in development of the neuromuscular junction (NMJ). Has antibacterial activity against both Gram-positive and Gram-negative bacteria. This is Midkine from Xenopus tropicalis (Western clawed frog).